Here is a 317-residue protein sequence, read N- to C-terminus: Methionyl-tRNA formyltransferase (317 aa).

112–115 (SLLP) provides a ligand contact to (6S)-5,6,7,8-tetrahydrofolate.

The protein belongs to the Fmt family.

The catalysed reaction is L-methionyl-tRNA(fMet) + (6R)-10-formyltetrahydrofolate = N-formyl-L-methionyl-tRNA(fMet) + (6S)-5,6,7,8-tetrahydrofolate + H(+). Functionally, attaches a formyl group to the free amino group of methionyl-tRNA(fMet). The formyl group appears to play a dual role in the initiator identity of N-formylmethionyl-tRNA by promoting its recognition by IF2 and preventing the misappropriation of this tRNA by the elongation apparatus. The sequence is that of Methionyl-tRNA formyltransferase from Histophilus somni (strain 2336) (Haemophilus somnus).